The chain runs to 432 residues: MEFYLSSDCASLARYVSKVVYLEDNDIAHIYDGELHIHCSKIGSEDFLFRTVQKLELELSKIKKGPYDNFMQKEIYEQCETTKNVMRGRVDAFTNRVVLGGLENWLTELRRAKRIIMIASKSSFHSCLAARPIFEELMEVPVNVELALDFVDRNCCIFRNDVCIFVSRSGETTDTINALNYCIKKEAVTIGVVNCSGSSISRFTHCGVHTNTGPEKGIATTKSYTSQYIALVMIALWMSEDLVSKIERRKEIIQALTIVPSQIKEVLELEPLIIELCDKKLKQHDTFLLLGRGYQFASALEGASKMKEISYVHSESILTDELGHRVLAVASDNPPIIAFATKDAFSPKIASCIDQIIERKGNPIIICNKGHKIWEQDKQKGNVVTLEVPQTVDCLQGILNVIPLQLISYWLAIKKDIGVDLPRDSAMSAPDI.

SIS domains follow at residues 105–244 and 277–422; these read WLTE…DLVS and CDKK…VDLP.

This is an uncharacterized protein from Saccharomyces cerevisiae (strain Lalvin EC1118 / Prise de mousse) (Baker's yeast).